A 492-amino-acid chain; its full sequence is Alpha/beta hydrolase ucsC (492 aa).

Serine 258 acts as the Nucleophile in catalysis.

Belongs to the AB hydrolase superfamily. FUS2 hydrolase family. As to quaternary structure, homodimer.

The protein operates within mycotoxin biosynthesis. Alpha/beta hydrolase; part of the gene cluster that mediates the biosynthesis of UCS1025A, a member of the pyrrolizidinone family that acts as a strong telomerase inhibitor and displays potent antibacterial and antitumor properties. These compounds share a hemiaminal-containing pyrrolizidinone core fused with a gamma-lactone, giving a furopyrrolizidine that is connected to a decalin fragment. The polyketide synthase module (PKS) of the PKS-NRPS ucsA is responsible for the synthesis of the polyketide backbone via the condensation of an acetyl-CoA starter unit with 6 malonyl-CoA units. The downstream nonribosomal peptide synthetase (NRPS) module then amidates the carboxyl end of the polyketide with a 2S,3S-methylproline derived from L-isoleucine by the 2-oxoglutarate-dependent dioxygenase ucsF which converts L-isoleucine to (4S,5S)-4-methylpyrroline-5-carboxylate that is further converted to 2S,3S-methylproline by the pyrroline-5-carboxylate reductase ucsG. Reductive release of the completed aminoacyl polyketide from the assembly line can form the 3-pyrrolin-2-one structure via an intramolecular Knoevenagel reaction. Because ucsA lacks a designated enoylreductase (ER) domain, the required activity is provided the enoyl reductase ucsL. This keto acyclic precursor is the substrate of the Diels-Alderase ucsH, that catalyzes the Diels-Alder cycloaddition. Oxidation of the 3S-methyl group to a carboxylate by the cytochrome P450 monooxygenase ucsK allows an oxa-Michael cyclization that might involve the reductase/dehydrogenase ucsI and which furnishes the furopyrrolizidine. The oxidase ucsJ likely plays a critical role in stereoselective reduction of the C5-C6 double bond to afford the required R-configured carboxylate group. Further enolization and oxidation at C5 by an unidentified enzyme affords the last intermediate that can undergo oxa-Michael cyclization to yield UCS1025A. This chain is Alpha/beta hydrolase ucsC, found in Acremonium sp.